Reading from the N-terminus, the 123-residue chain is Ig heavy chain V region HPCG14 (123 aa).

Residues 1–114 enclose the Ig-like domain; the sequence is EVKLVESGGG…GYDYWFDVWG (114 aa).

The sequence is that of Ig heavy chain V region HPCG14 from Mus musculus (Mouse).